The chain runs to 632 residues: MTHEFTESYDVIVIGAGHAGVEASLATSRMGCKTLLATINLDMLAFMPCNPSIGGSAKGIVVREIDALGGEMSKNIDKTYIQMKMLNTGKGPAVRALRAQADKSLYAREMKHTVEKQANLTLRQTMIDDILVEDGRVVGVLTATGQKFAAKAVVVTTGTALRGEIILGELKYSSGPNNSLASVTLADNLKKLGLEIGRFKTGTPPRVKASSINYDQTEIQPGDDKPNHFSFMSKDADYLKDQIPCWLTYTNQTSHDIINQNLYRAPMFSGIVKGVGPRYCPSIEDKIVRFADKERHQLFLEPEGRDTEEVYVQGLSTSLPEDVQKDLIHSIKGLEKAEMMRTGYAIEYDIVLPHQLRATLETKLISGLFTAGQTNGTSGYEEAAGQGLIAGINAALKVQGKPELILKRSDAYIGVMIDDLVTKGTLEPYRLLTSRAEYRLILRHDNADMRLTEIGRDIGLVDDERWKAFEIKKNQFDNELKRLNSIKLKPVKATNDRVQELGFKPLTDAMTAKEFMRRPEIDYATAVSFVGPAAEDLDAKIIELLETEIKYEGYIRKALDQVAKMKRMEEKRIPANIDWDAIDSIATEARQKFKKINPETIGQASRISGVNPADISILMIYLEGNGKAHRKY.

FAD-binding positions include 15-20, isoleucine 127, and serine 182; that span reads GAGHAG. Position 276 to 290 (276 to 290) interacts with NAD(+); sequence GPRYCPSIEDKIVRF. Glutamine 373 is an FAD binding site.

The protein belongs to the MnmG family. Homodimer. Heterotetramer of two MnmE and two MnmG subunits. It depends on FAD as a cofactor.

The protein resides in the cytoplasm. Functionally, NAD-binding protein involved in the addition of a carboxymethylaminomethyl (cmnm) group at the wobble position (U34) of certain tRNAs, forming tRNA-cmnm(5)s(2)U34. The chain is tRNA uridine 5-carboxymethylaminomethyl modification enzyme MnmG from Streptococcus pyogenes serotype M18 (strain MGAS8232).